Reading from the N-terminus, the 101-residue chain is Putative pterin-4-alpha-carbinolamine dehydratase (101 aa).

It belongs to the pterin-4-alpha-carbinolamine dehydratase family.

The enzyme catalyses (4aS,6R)-4a-hydroxy-L-erythro-5,6,7,8-tetrahydrobiopterin = (6R)-L-erythro-6,7-dihydrobiopterin + H2O. This chain is Putative pterin-4-alpha-carbinolamine dehydratase, found in Burkholderia mallei (strain ATCC 23344).